The primary structure comprises 137 residues: Protein apnoia (137 aa).

3 helical membrane-spanning segments follow: residues 7–27 (IVFA…QQQA), 55–75 (LVPG…LTVV), and 76–96 (SIKG…QMLS).

In terms of assembly, interacts with crb.

The protein localises to the apical cell membrane. Transmembrane protein that plays a key role in trachea development by regulating crb localization and maintenance at the apical cell membrane. Required for anisotropic apical surface expansion important for tracheal tube elongation and lumen stability at larval stages. This is Protein apnoia from Drosophila melanogaster (Fruit fly).